The sequence spans 940 residues: Gamma-aminobutyric acid type B receptor subunit 2 (940 aa).

The first 40 residues, 1–40 (MASPPSSGQPRPPPPPPPPARLLLPLLLSLLLSLAPGAWG), serve as a signal peptide directing secretion. Residues 41–482 (WARGAPRPPP…LRKISLPLYS (442 aa)) lie on the Extracellular side of the membrane. Asn89 is a glycosylation site (N-linked (GlcNAc...) asparagine). Disulfide bonds link Cys107/Cys134, Cys236/Cys265, and Cys264/Cys301. N-linked (GlcNAc...) asparagine glycosylation is found at Asn297, Asn388, Asn403, and Asn452. The helical transmembrane segment at 483–503 (ILSALTILGMIMASAFLFFNI) threads the bilayer. Residues 504 to 521 (KNRNQKLIKMSSPYMNNL) are Cytoplasmic-facing. The chain crosses the membrane as a helical span at residues 522 to 542 (IILGGMLSYASIFLFGLDGSF). Residues 543–550 (VSEKTFET) are Extracellular-facing. A helical membrane pass occupies residues 551 to 571 (LCTVRTWILTVGYTTAFGAMF). At 572–596 (AKTWRVHAIFKNVKMKKKIIKDQKL) the chain is on the cytoplasmic side. A helical membrane pass occupies residues 597-617 (LVIVGGMLLIDLCILICWQAV). Over 618–653 (DPLRRTVERYSMEPDPAGRDISIRPLLEHCENTHMT) the chain is Extracellular. The helical transmembrane segment at 654–674 (IWLGIVYAYKGLLMLFGCFLA) threads the bilayer. Residues 675 to 690 (WETRNVSIPALNDSKY) lie on the Cytoplasmic side of the membrane. The chain crosses the membrane as a helical span at residues 691-711 (IGMSVYNVGIMCIIGAAVSFL). Residues 712–719 (TRDQPNVQ) lie on the Extracellular side of the membrane. Residues 720 to 740 (FCIVALVIIFCSTITLCLVFV) traverse the membrane as a helical segment. Over 741-940 (PKLITLRTNP…PSFRVMVSGL (200 aa)) the chain is Cytoplasmic. Residues 762–789 (TQNQKKEDSKTSTSVTSVNQASTSRLEG) form a disordered region. Over residues 772 to 786 (TSTSVTSVNQASTSR) the composition is skewed to polar residues. 2 positions are modified to phosphoserine: Ser775 and Ser778. The stretch at 781–818 (QASTSRLEGLQSENHRLRMKITELDKDLEEVTMQLQDT) forms a coiled coil. Thr818 carries the post-translational modification Phosphothreonine. Phosphoserine is present on residues Ser883, Ser892, Ser912, Ser915, Ser919, and Ser923.

This sequence belongs to the G-protein coupled receptor 3 family. GABA-B receptor subfamily. As to quaternary structure, heterodimer of GABBR1 and GABBR2. Homodimers may form, but are inactive. Interacts (via C-terminus) with ATF4 (via leucine zipper domain).

The protein resides in the cell membrane. It localises to the postsynaptic cell membrane. In terms of biological role, component of a heterodimeric G-protein coupled receptor for GABA, formed by GABBR1 and GABBR2. Within the heterodimeric GABA receptor, only GABBR1 seems to bind agonists, while GABBR2 mediates coupling to G proteins. Ligand binding causes a conformation change that triggers signaling via guanine nucleotide-binding proteins (G proteins) and modulates the activity of down-stream effectors, such as adenylate cyclase. Signaling inhibits adenylate cyclase, stimulates phospholipase A2, activates potassium channels, inactivates voltage-dependent calcium-channels and modulates inositol phospholipid hydrolysis. Plays a critical role in the fine-tuning of inhibitory synaptic transmission. Pre-synaptic GABA receptor inhibits neurotransmitter release by down-regulating high-voltage activated calcium channels, whereas postsynaptic GABA receptor decreases neuronal excitability by activating a prominent inwardly rectifying potassium (Kir) conductance that underlies the late inhibitory postsynaptic potentials. Not only implicated in synaptic inhibition but also in hippocampal long-term potentiation, slow wave sleep, muscle relaxation and antinociception. Interacts with KCTD8, KCTD12 and KCTD16; this interaction determines the pharmacology and kinetics of the receptor response, the KCTD proteins markedly accelerating the GABA-B response, although to different extents. The sequence is that of Gamma-aminobutyric acid type B receptor subunit 2 (Gabbr2) from Mus musculus (Mouse).